The primary structure comprises 229 residues: Thylakoid lumenal 19 kDa protein, chloroplastic (229 aa).

The protein resides in the plastid. It localises to the chloroplast thylakoid lumen. The protein is Thylakoid lumenal 19 kDa protein, chloroplastic of Arabidopsis thaliana (Mouse-ear cress).